The chain runs to 203 residues: ATP-dependent Clp protease proteolytic subunit (203 aa).

The active-site Nucleophile is Ser-107. The active site involves His-132.

The protein belongs to the peptidase S14 family. As to quaternary structure, fourteen ClpP subunits assemble into 2 heptameric rings which stack back to back to give a disk-like structure with a central cavity, resembling the structure of eukaryotic proteasomes.

It localises to the cytoplasm. It carries out the reaction Hydrolysis of proteins to small peptides in the presence of ATP and magnesium. alpha-casein is the usual test substrate. In the absence of ATP, only oligopeptides shorter than five residues are hydrolyzed (such as succinyl-Leu-Tyr-|-NHMec, and Leu-Tyr-Leu-|-Tyr-Trp, in which cleavage of the -Tyr-|-Leu- and -Tyr-|-Trp bonds also occurs).. Cleaves peptides in various proteins in a process that requires ATP hydrolysis. Has a chymotrypsin-like activity. Plays a major role in the degradation of misfolded proteins. In Shewanella sediminis (strain HAW-EB3), this protein is ATP-dependent Clp protease proteolytic subunit.